The sequence spans 1726 residues: Probable serine/threonine-protein kinase roco4 (1726 aa).

4 LRR repeats span residues 256–277 (KGKR…ITQM), 280–301 (HLVE…IQLL), 303–324 (SLRI…ICYL), and 326–347 (DLKI…VVQS). One can recognise a Roc domain in the interval 364–544 (KSETWNKVKL…KRLIHEAEKS (181 aa)). GTP-binding positions include 377–384 (GQEGVGKT), 428–432 (DFGGQ), and 487–490 (THSD). The 197-residue stretch at 591 to 787 (AINSQKERYI…RTYWRNGVLL (197 aa)) folds into the COR domain. The segment covering 800 to 881 (SKQQQLQQQQ…STLNSQQLIN (82 aa)) has biased composition (low complexity). The tract at residues 800 to 890 (SKQQQLQQQQ…NPSVSPLSST (91 aa)) is disordered. Positions 1026–1292 (IEYEKQIGKG…SYIVKELSEL (267 aa)) constitute a Protein kinase domain. ATP contacts are provided by residues 1032–1040 (IGKGGFGLV) and lysine 1055. Catalysis depends on aspartate 1154, which acts as the Proton acceptor. The segment covering 1319 to 1331 (ASTSSNADDGSQT) has biased composition (polar residues). A disordered region spans residues 1319–1385 (ASTSSNADDG…SSPSTSFINS (67 aa)). Residues 1332-1348 (NNNNNNNNNNNNNNNNN) are compositionally biased toward low complexity. A compositionally biased stretch (polar residues) spans 1349-1364 (SGSSIALSPSRSFEQQ). A compositionally biased stretch (low complexity) spans 1365–1381 (TTTTTTTTTSPSSPSTS). 6 WD repeats span residues 1422–1461 (SVHK…LINE), 1463–1502 (KCPH…IVQQ), 1506–1546 (PHKG…KKHS), 1589–1627 (KHST…ELQK), 1633–1670 (AHHE…KPFT), and 1674–1714 (HHKQ…EKKT).

The protein belongs to the protein kinase superfamily. TKL Ser/Thr protein kinase family. ROCO subfamily.

It carries out the reaction L-seryl-[protein] + ATP = O-phospho-L-seryl-[protein] + ADP + H(+). It catalyses the reaction L-threonyl-[protein] + ATP = O-phospho-L-threonyl-[protein] + ADP + H(+). This chain is Probable serine/threonine-protein kinase roco4 (roco4), found in Dictyostelium discoideum (Social amoeba).